A 642-amino-acid chain; its full sequence is Threonine--tRNA ligase (642 aa).

The 61-residue stretch at 1-61 (MPVITLPDGS…ENDAQLSIIT (61 aa)) folds into the TGS domain. The interval 243–534 (DHRKIGKQLD…LTEEFAGFFP (292 aa)) is catalytic. The residue at position 286 (Lys-286) is an N6-acetyllysine. 3 residues coordinate Zn(2+): Cys-334, His-385, and His-511.

The protein belongs to the class-II aminoacyl-tRNA synthetase family. As to quaternary structure, homodimer. Zn(2+) serves as cofactor.

It localises to the cytoplasm. The enzyme catalyses tRNA(Thr) + L-threonine + ATP = L-threonyl-tRNA(Thr) + AMP + diphosphate + H(+). Catalyzes the attachment of threonine to tRNA(Thr) in a two-step reaction: L-threonine is first activated by ATP to form Thr-AMP and then transferred to the acceptor end of tRNA(Thr). Also edits incorrectly charged L-seryl-tRNA(Thr). This is Threonine--tRNA ligase from Escherichia coli O9:H4 (strain HS).